A 441-amino-acid chain; its full sequence is GTPase Der (441 aa).

2 consecutive EngA-type G domains span residues 3–167 (PLIA…PKGS) and 176–351 (TKIA…EQFA). GTP is bound by residues 9–16 (GRPNVGKS), 56–60 (DTGGF), 119–122 (NKID), 182–189 (GRPNVGKS), 229–233 (DTAGI), and 294–297 (NKWD). One can recognise a KH-like domain in the interval 352 to 436 (RRITTSDLNR…PMRLLFKGRE (85 aa)).

Belongs to the TRAFAC class TrmE-Era-EngA-EngB-Septin-like GTPase superfamily. EngA (Der) GTPase family. As to quaternary structure, associates with the 50S ribosomal subunit.

In terms of biological role, GTPase that plays an essential role in the late steps of ribosome biogenesis. The polypeptide is GTPase Der (Geotalea uraniireducens (strain Rf4) (Geobacter uraniireducens)).